Reading from the N-terminus, the 251-residue chain is MQIHLLIVDALNLIRRIHAVQGSPCVKACQHALQQLIQHSQPSHAVAVFDEDDRSDSWRHQCLPDYKAGRSPMPDNLQQEMPLIRQAFNELGVACWHSPGNEADDLAATLVVKVAGAGHQVTIVSTDKGYCQLLAPNIQIRDYFQKRWLDMPFVKQEFGVLPRQLPDYWGLAGISSSKIPGVAGVGAKTATLLLQQADTLEVLYQNLESIPEKWRKKLQQHQQMAFTCKQIATLKTDLLLSGNLQQLRLKK.

A Mg(2+)-binding site is contributed by D104. Residues 160–250 form the 5'-3' exonuclease domain; sequence VLPRQLPDYW…SGNLQQLRLK (91 aa). K(+) contacts are provided by L171, A172, P180, V182, and V185. Residues 184-189 are interaction with DNA; sequence GVGAKT.

It belongs to the Xni family. It depends on Mg(2+) as a cofactor. The cofactor is K(+).

Functionally, has flap endonuclease activity. During DNA replication, flap endonucleases cleave the 5'-overhanging flap structure that is generated by displacement synthesis when DNA polymerase encounters the 5'-end of a downstream Okazaki fragment. The protein is Flap endonuclease Xni of Yersinia pestis bv. Antiqua (strain Nepal516).